A 108-amino-acid polypeptide reads, in one-letter code: Putative transmembrane protein ORF108 (108 aa).

3 helical membrane passes run 11–31 (FIMG…SSII), 33–53 (IAMT…TVHF), and 69–89 (VGFL…LLII).

The protein resides in the host membrane. In Acidianus hospitalis (AFV-1), this protein is Putative transmembrane protein ORF108.